Here is a 268-residue protein sequence, read N- to C-terminus: Undecaprenyl-diphosphatase (268 aa).

7 helical membrane-spanning segments follow: residues 47–67 (FAIL…FFKL), 83–103 (FIIG…IAGK), 109–129 (LFDP…LLWV), 144–164 (YPLM…IPGV), 184–204 (AAEF…VYDF), 218–238 (LIAI…KAFL), and 246–266 (FVLF…ALAL).

Belongs to the UppP family.

The protein localises to the cell inner membrane. The catalysed reaction is di-trans,octa-cis-undecaprenyl diphosphate + H2O = di-trans,octa-cis-undecaprenyl phosphate + phosphate + H(+). In terms of biological role, catalyzes the dephosphorylation of undecaprenyl diphosphate (UPP). Confers resistance to bacitracin. The polypeptide is Undecaprenyl-diphosphatase (Bradyrhizobium sp. (strain ORS 278)).